A 1086-amino-acid chain; its full sequence is Phosphinothricin tripeptide synthetase PhsC (1086 aa).

Residues 22-43 (RLRAAAAPGPDPAIPRRPDDDG) form a disordered region. The tract at residues 45–484 (VPLSFAQHRL…LAALPVLTRD (440 aa)) is condensation. Positions 510-901 (LEDSARRHPD…GRTDHQVKLR (392 aa)) are adenylation. The segment at 983-1007 (GKLDREALPDPLAQSGDTAGNRPPL) is disordered. Positions 1006-1081 (PLLDPVEERI…GLARSVSAER (76 aa)) constitute a Carrier domain. At S1041 the chain carries O-(pantetheine 4'-phosphoryl)serine.

Belongs to the NRP synthetase family. It depends on pantetheine 4'-phosphate as a cofactor.

The catalysed reaction is holo-[peptidyl-carrier protein] + L-alanine + ATP = L-alanyl-[peptidyl-carrier protein] + AMP + diphosphate. It participates in secondary metabolite biosynthesis; bialaphos biosynthesis. Functionally, involved in the biosynthesis of phosphinothricin tripeptide (PTT), also known as bialaphos (BA), a natural-product antibiotic and potent herbicide. Adenylates L-alanine and loads it onto a peptidyl carrier domain via a thioester linkage to the phosphopanthetheine moiety. Shows weaker activity with aminobutyric acid and L-serine. The sequence is that of Phosphinothricin tripeptide synthetase PhsC from Streptomyces viridochromogenes (strain DSM 40736 / JCM 4977 / BCRC 1201 / Tue 494).